Here is a 338-residue protein sequence, read N- to C-terminus: Lipoate-protein ligase A (338 aa).

One can recognise a BPL/LPL catalytic domain in the interval 29 to 216; the sequence is PADQRVLFLW…AYCEHYQQQV (188 aa). ATP is bound by residues Arg71, 76–79, and Lys134; that span reads GAVF. Lys134 contributes to the (R)-lipoate binding site.

This sequence belongs to the LplA family. Monomer.

Its subcellular location is the cytoplasm. It carries out the reaction L-lysyl-[lipoyl-carrier protein] + (R)-lipoate + ATP = N(6)-[(R)-lipoyl]-L-lysyl-[lipoyl-carrier protein] + AMP + diphosphate + H(+). Its pathway is protein modification; protein lipoylation via exogenous pathway; protein N(6)-(lipoyl)lysine from lipoate: step 1/2. It participates in protein modification; protein lipoylation via exogenous pathway; protein N(6)-(lipoyl)lysine from lipoate: step 2/2. In terms of biological role, catalyzes both the ATP-dependent activation of exogenously supplied lipoate to lipoyl-AMP and the transfer of the activated lipoyl onto the lipoyl domains of lipoate-dependent enzymes. In Vibrio cholerae serotype O1 (strain ATCC 39541 / Classical Ogawa 395 / O395), this protein is Lipoate-protein ligase A.